Here is a 178-residue protein sequence, read N- to C-terminus: Large ribosomal subunit protein uL6 (178 aa).

The protein belongs to the universal ribosomal protein uL6 family. Part of the 50S ribosomal subunit.

Functionally, this protein binds to the 23S rRNA, and is important in its secondary structure. It is located near the subunit interface in the base of the L7/L12 stalk, and near the tRNA binding site of the peptidyltransferase center. This is Large ribosomal subunit protein uL6 from Nitrosococcus oceani (strain ATCC 19707 / BCRC 17464 / JCM 30415 / NCIMB 11848 / C-107).